The chain runs to 501 residues: Glycerol kinase (501 aa).

Threonine 16 contacts ADP. ATP is bound by residues threonine 16, threonine 17, and serine 18. Sn-glycerol 3-phosphate is bound at residue threonine 16. Arginine 20 contributes to the ADP binding site. Arginine 84, glutamate 85, tyrosine 135, and aspartate 242 together coordinate sn-glycerol 3-phosphate. Glycerol is bound by residues arginine 84, glutamate 85, tyrosine 135, aspartate 242, and glutamine 243. ADP is bound by residues threonine 264 and glycine 307. ATP-binding residues include threonine 264, glycine 307, glutamine 311, and glycine 408. Glycine 408 lines the ADP pocket.

It belongs to the FGGY kinase family.

The catalysed reaction is glycerol + ATP = sn-glycerol 3-phosphate + ADP + H(+). Its pathway is polyol metabolism; glycerol degradation via glycerol kinase pathway; sn-glycerol 3-phosphate from glycerol: step 1/1. Functionally, key enzyme in the regulation of glycerol uptake and metabolism. Catalyzes the phosphorylation of glycerol to yield sn-glycerol 3-phosphate. The chain is Glycerol kinase from Saccharolobus islandicus (strain L.S.2.15 / Lassen #1) (Sulfolobus islandicus).